We begin with the raw amino-acid sequence, 94 residues long: Small polypeptide ROTUNDIFOLIA LIKE 1 (94 aa).

Residues 1 to 13 (MRQCASASSSTSR) show a composition bias toward polar residues. The segment at 1–26 (MRQCASASSSTSRPPEAAGEEGKRRR) is disordered. The interval 28-59 (RRGWLLQAAAREQRSRFYIFRRCVAMLLCWYK) is required for DVL/RTFL small polypeptide activity. Residues 63–82 (ITPYNVVPLGIYGLVWFATM) traverse the membrane as a helical segment.

Belongs to the DVL/RTFL small polypeptides family.

The protein resides in the cell membrane. Its function is as follows. Small polypeptide acting as a regulatory molecule which coordinates cellular responses required for differentiation, growth and development, probably by restricting polar cell proliferation in lateral organs. The sequence is that of Small polypeptide ROTUNDIFOLIA LIKE 1 from Oryza sativa subsp. japonica (Rice).